We begin with the raw amino-acid sequence, 235 residues long: Large ribosomal subunit protein uL1 (235 aa).

It belongs to the universal ribosomal protein uL1 family. As to quaternary structure, part of the 50S ribosomal subunit.

Its function is as follows. Binds directly to 23S rRNA. The L1 stalk is quite mobile in the ribosome, and is involved in E site tRNA release. In terms of biological role, protein L1 is also a translational repressor protein, it controls the translation of the L11 operon by binding to its mRNA. The protein is Large ribosomal subunit protein uL1 of Mycolicibacterium vanbaalenii (strain DSM 7251 / JCM 13017 / BCRC 16820 / KCTC 9966 / NRRL B-24157 / PYR-1) (Mycobacterium vanbaalenii).